The sequence spans 272 residues: 2-dehydro-3-deoxyphosphooctonate aldolase (272 aa).

It belongs to the KdsA family.

The protein localises to the cytoplasm. It carries out the reaction D-arabinose 5-phosphate + phosphoenolpyruvate + H2O = 3-deoxy-alpha-D-manno-2-octulosonate-8-phosphate + phosphate. The protein operates within carbohydrate biosynthesis; 3-deoxy-D-manno-octulosonate biosynthesis; 3-deoxy-D-manno-octulosonate from D-ribulose 5-phosphate: step 2/3. It functions in the pathway bacterial outer membrane biogenesis; lipopolysaccharide biosynthesis. This Geobacter sulfurreducens (strain ATCC 51573 / DSM 12127 / PCA) protein is 2-dehydro-3-deoxyphosphooctonate aldolase.